Reading from the N-terminus, the 351-residue chain is Adenine deaminase (351 aa).

Zn(2+) is bound by residues H20, H22, and H200. The active-site Proton donor is E203. Position 281 (D281) interacts with Zn(2+). D282 provides a ligand contact to substrate.

This sequence belongs to the metallo-dependent hydrolases superfamily. Adenosine and AMP deaminases family. Adenine deaminase type 2 subfamily. The cofactor is Zn(2+).

The catalysed reaction is adenine + H2O + H(+) = hypoxanthine + NH4(+). Functionally, catalyzes the hydrolytic deamination of adenine to hypoxanthine. Plays an important role in the purine salvage pathway and in nitrogen catabolism. This Cupriavidus pinatubonensis (strain JMP 134 / LMG 1197) (Cupriavidus necator (strain JMP 134)) protein is Adenine deaminase.